We begin with the raw amino-acid sequence, 158 residues long: Phosphopantetheine adenylyltransferase (158 aa).

Ser-9 serves as a coordination point for substrate. Residues 9-10 and His-17 each bind ATP; that span reads SF. Lys-41, Val-73, and Lys-87 together coordinate substrate. Residues 88–90, Glu-98, and 122–128 contribute to the ATP site; these read GLR and YSFVSSS.

It belongs to the bacterial CoaD family. Homohexamer. Requires Mg(2+) as cofactor.

It is found in the cytoplasm. The catalysed reaction is (R)-4'-phosphopantetheine + ATP + H(+) = 3'-dephospho-CoA + diphosphate. Its pathway is cofactor biosynthesis; coenzyme A biosynthesis; CoA from (R)-pantothenate: step 4/5. Functionally, reversibly transfers an adenylyl group from ATP to 4'-phosphopantetheine, yielding dephospho-CoA (dPCoA) and pyrophosphate. This Mycobacterium sp. (strain JLS) protein is Phosphopantetheine adenylyltransferase.